The following is a 605-amino-acid chain: Elongation factor 4 (605 aa).

Residues 9 to 192 (SRTRNFCIIA…AIIARIPSPK (184 aa)) enclose the tr-type G domain. GTP-binding positions include 21–26 (DHGKST) and 139–142 (NKID).

This sequence belongs to the TRAFAC class translation factor GTPase superfamily. Classic translation factor GTPase family. LepA subfamily.

It is found in the cell inner membrane. It catalyses the reaction GTP + H2O = GDP + phosphate + H(+). In terms of biological role, required for accurate and efficient protein synthesis under certain stress conditions. May act as a fidelity factor of the translation reaction, by catalyzing a one-codon backward translocation of tRNAs on improperly translocated ribosomes. Back-translocation proceeds from a post-translocation (POST) complex to a pre-translocation (PRE) complex, thus giving elongation factor G a second chance to translocate the tRNAs correctly. Binds to ribosomes in a GTP-dependent manner. This chain is Elongation factor 4, found in Chlorobium limicola (strain DSM 245 / NBRC 103803 / 6330).